Reading from the N-terminus, the 591-residue chain is Isocitrate dehydrogenase kinase/phosphatase (591 aa).

ATP-binding positions include 315–321 (APGVKGM) and lysine 336. Residue aspartate 371 is part of the active site.

Belongs to the AceK family.

Its subcellular location is the cytoplasm. The enzyme catalyses L-seryl-[isocitrate dehydrogenase] + ATP = O-phospho-L-seryl-[isocitrate dehydrogenase] + ADP + H(+). Its function is as follows. Bifunctional enzyme which can phosphorylate or dephosphorylate isocitrate dehydrogenase (IDH) on a specific serine residue. This is a regulatory mechanism which enables bacteria to bypass the Krebs cycle via the glyoxylate shunt in response to the source of carbon. When bacteria are grown on glucose, IDH is fully active and unphosphorylated, but when grown on acetate or ethanol, the activity of IDH declines drastically concomitant with its phosphorylation. This is Isocitrate dehydrogenase kinase/phosphatase from Pectobacterium atrosepticum (strain SCRI 1043 / ATCC BAA-672) (Erwinia carotovora subsp. atroseptica).